A 431-amino-acid polypeptide reads, in one-letter code: Serine hydroxymethyltransferase (431 aa).

(6S)-5,6,7,8-tetrahydrofolate is bound by residues Leu-128 and 132–134 (GHL). Lys-237 bears the N6-(pyridoxal phosphate)lysine mark. Residue Glu-253 participates in (6S)-5,6,7,8-tetrahydrofolate binding.

It belongs to the SHMT family. Homodimer. Requires pyridoxal 5'-phosphate as cofactor.

It is found in the cytoplasm. It carries out the reaction (6R)-5,10-methylene-5,6,7,8-tetrahydrofolate + glycine + H2O = (6S)-5,6,7,8-tetrahydrofolate + L-serine. Its pathway is one-carbon metabolism; tetrahydrofolate interconversion. The protein operates within amino-acid biosynthesis; glycine biosynthesis; glycine from L-serine: step 1/1. Catalyzes the reversible interconversion of serine and glycine with tetrahydrofolate (THF) serving as the one-carbon carrier. This reaction serves as the major source of one-carbon groups required for the biosynthesis of purines, thymidylate, methionine, and other important biomolecules. Also exhibits THF-independent aldolase activity toward beta-hydroxyamino acids, producing glycine and aldehydes, via a retro-aldol mechanism. In Cereibacter sphaeroides (strain ATCC 17023 / DSM 158 / JCM 6121 / CCUG 31486 / LMG 2827 / NBRC 12203 / NCIMB 8253 / ATH 2.4.1.) (Rhodobacter sphaeroides), this protein is Serine hydroxymethyltransferase.